A 579-amino-acid polypeptide reads, in one-letter code: Carboxysome shell carbonic anhydrase (579 aa).

The disordered stretch occupies residues 72 to 95 (GGGRVRSARDQRQPGWVRRDKGAT). Over residues 78–93 (SARDQRQPGWVRRDKG) the composition is skewed to basic and acidic residues. A Zn(2+)-binding site is contributed by Cys240. Residue Asp242 is the Proton acceptor of the active site. His308 and Cys319 together coordinate Zn(2+).

Belongs to the beta-class carbonic anhydrase family. CsoSCA subfamily. In terms of assembly, homodimer. Zn(2+) is required as a cofactor.

Its subcellular location is the carboxysome. The enzyme catalyses hydrogencarbonate + H(+) = CO2 + H2O. Its activity is regulated as follows. Inhibited by dithiothreitol, partially inhibited by acetatzolamide and cyanide. Functionally, reversible hydration of carbon dioxide. Essential for photosynthetic carbon dioxide fixation, supplies CO(2) to RuBisCO (ribulose bisphosphate carboxylase, cbbL-cbbS) in the carboxysome. This Parasynechococcus marenigrum (strain WH8102) protein is Carboxysome shell carbonic anhydrase.